The sequence spans 424 residues: Histidine--tRNA ligase (424 aa).

The protein belongs to the class-II aminoacyl-tRNA synthetase family. As to quaternary structure, homodimer.

The protein localises to the cytoplasm. It catalyses the reaction tRNA(His) + L-histidine + ATP = L-histidyl-tRNA(His) + AMP + diphosphate + H(+). The protein is Histidine--tRNA ligase of Bacillus licheniformis (strain ATCC 14580 / DSM 13 / JCM 2505 / CCUG 7422 / NBRC 12200 / NCIMB 9375 / NCTC 10341 / NRRL NRS-1264 / Gibson 46).